We begin with the raw amino-acid sequence, 171 residues long: RNA silencing suppressor p19 (171 aa).

Residues 1-15 (MERAIPGNDTREPAY) show a composition bias toward basic and acidic residues. A disordered region spans residues 1 to 32 (MERAIPGNDTREPAYGERWNGGPGGSTSPFQL).

This sequence belongs to the tombusvirus protein p19 family. As to quaternary structure, homodimer.

Viral suppressor of RNA silencing which binds specifically to silencing RNAs (siRNAs). Acts as a molecular caliper to specifically select siRNAs based on the length of the duplex region of the RNA. This Capsicum annuum (Capsicum pepper) protein is RNA silencing suppressor p19.